A 342-amino-acid polypeptide reads, in one-letter code: MTITLGQLAQHLGAELHGDADVIIQRIANLETAQAGEIGFLSDSKYQQYLATTQASAVLLRAADLAMCQTNALVVKDPYIAFARVAQLLDSTPAPAVNIHPSAVIADDVQLGQGVAVGANAVIETGVVLGDGAIIGAGCFVGKNSKLGARSKLWANVTIYHNVRIGDDCLVQSGTVIGADGFGYANERGEWIKIPQLGGVVIGNRVEIGSNTCIDRGAIDDTRIADNVIIDNLCQIAHNVEIGYGTAIAGAATFAGSTKIGKYCIIGGASVFNGHIEICDQVTVTGMAMVMRSITEPGLYSSGIPAQTNKEWRKTAARTLHIDDMYKRLSNIEKLLDKQEQK.

H238 (proton acceptor) is an active-site residue.

The protein belongs to the transferase hexapeptide repeat family. LpxD subfamily. In terms of assembly, homotrimer.

It catalyses the reaction a UDP-3-O-[(3R)-3-hydroxyacyl]-alpha-D-glucosamine + a (3R)-hydroxyacyl-[ACP] = a UDP-2-N,3-O-bis[(3R)-3-hydroxyacyl]-alpha-D-glucosamine + holo-[ACP] + H(+). The protein operates within bacterial outer membrane biogenesis; LPS lipid A biosynthesis. Its function is as follows. Catalyzes the N-acylation of UDP-3-O-acylglucosamine using 3-hydroxyacyl-ACP as the acyl donor. Is involved in the biosynthesis of lipid A, a phosphorylated glycolipid that anchors the lipopolysaccharide to the outer membrane of the cell. In Tolumonas auensis (strain DSM 9187 / NBRC 110442 / TA 4), this protein is UDP-3-O-acylglucosamine N-acyltransferase.